A 215-amino-acid polypeptide reads, in one-letter code: Pyrrolidone-carboxylate peptidase (215 aa).

Catalysis depends on residues glutamate 80, cysteine 143, and histidine 167.

It belongs to the peptidase C15 family. In terms of assembly, homotetramer.

It is found in the cytoplasm. The enzyme catalyses Release of an N-terminal pyroglutamyl group from a polypeptide, the second amino acid generally not being Pro.. Removes 5-oxoproline from various penultimate amino acid residues except L-proline. The polypeptide is Pyrrolidone-carboxylate peptidase (Bacillus anthracis).